A 535-amino-acid chain; its full sequence is CTP synthase (535 aa).

The amidoligase domain stretch occupies residues M1 to L267. S13 contacts CTP. UTP is bound at residue S13. S14–I19 lines the ATP pocket. Residue Y54 coordinates L-glutamine. Residue D71 participates in ATP binding. Residues D71 and E141 each contribute to the Mg(2+) site. Residues D148–E150, K188–Q193, and K224 each bind CTP. Residues K188–Q193 and K224 each bind UTP. In terms of domain architecture, Glutamine amidotransferase type-1 spans R292 to S534. Residue G354 coordinates L-glutamine. C381 serves as the catalytic Nucleophile; for glutamine hydrolysis. L-glutamine is bound by residues L382–Q385, E405, and R462. Residues H507 and E509 contribute to the active site.

It belongs to the CTP synthase family. As to quaternary structure, homotetramer.

The enzyme catalyses UTP + L-glutamine + ATP + H2O = CTP + L-glutamate + ADP + phosphate + 2 H(+). It carries out the reaction L-glutamine + H2O = L-glutamate + NH4(+). The catalysed reaction is UTP + NH4(+) + ATP = CTP + ADP + phosphate + 2 H(+). It functions in the pathway pyrimidine metabolism; CTP biosynthesis via de novo pathway; CTP from UDP: step 2/2. Allosterically activated by GTP, when glutamine is the substrate; GTP has no effect on the reaction when ammonia is the substrate. The allosteric effector GTP functions by stabilizing the protein conformation that binds the tetrahedral intermediate(s) formed during glutamine hydrolysis. Inhibited by the product CTP, via allosteric rather than competitive inhibition. Catalyzes the ATP-dependent amination of UTP to CTP with either L-glutamine or ammonia as the source of nitrogen. Regulates intracellular CTP levels through interactions with the four ribonucleotide triphosphates. The sequence is that of CTP synthase from Bacillus cytotoxicus (strain DSM 22905 / CIP 110041 / 391-98 / NVH 391-98).